Here is an 889-residue protein sequence, read N- to C-terminus: Translation initiation factor IF-2 (889 aa).

Disordered regions lie at residues G47 to V85 and A206 to P302. 3 stretches are compositionally biased toward basic and acidic residues: residues Q52–P61, A214–V241, and A252–G263. The tr-type G domain occupies T389–T558. A G1 region spans residues G398 to T405. Residue G398 to T405 participates in GTP binding. The tract at residues G423 to H427 is G2. The G3 stretch occupies residues D444 to G447. GTP is bound by residues D444–H448 and N498–D501. Residues N498–D501 are G4. Residues S534–K536 form a G5 region.

It belongs to the TRAFAC class translation factor GTPase superfamily. Classic translation factor GTPase family. IF-2 subfamily.

The protein resides in the cytoplasm. One of the essential components for the initiation of protein synthesis. Protects formylmethionyl-tRNA from spontaneous hydrolysis and promotes its binding to the 30S ribosomal subunits. Also involved in the hydrolysis of GTP during the formation of the 70S ribosomal complex. The polypeptide is Translation initiation factor IF-2 (Colwellia psychrerythraea (strain 34H / ATCC BAA-681) (Vibrio psychroerythus)).